The sequence spans 183 residues: Putative manganese efflux pump MntP 1 (183 aa).

Transmembrane regions (helical) follow at residues 6-26 (LFLL…CIGI), 36-56 (IIFV…GGYI), 64-84 (IVPI…ILMI), 100-120 (IMYL…GFTT), 130-150 (LFMS…LGII), and 158-178 (ISII…LFGL).

The protein belongs to the MntP (TC 9.B.29) family.

Its subcellular location is the cell membrane. In terms of biological role, probably functions as a manganese efflux pump. This is Putative manganese efflux pump MntP 1 from Clostridium botulinum (strain Langeland / NCTC 10281 / Type F).